The sequence spans 120 residues: rRNA-processing protein CGR1 (120 aa).

Disordered regions lie at residues 1–26 (MVNETGESQKAAKGTPVSGKVWKAEK) and 81–120 (ERREKKEENERYERLAAKMHAKKVERMRRREKRNKALKER). Residues 47-106 (KKQKRLEDKQFKERLKALKDEKEEARQAKITMLKERREKKEENERYERLAAKMHAKKVER) are a coiled coil. The span at 81 to 96 (ERREKKEENERYERLA) shows a compositional bias: basic and acidic residues. Positions 97–113 (AKMHAKKVERMRRREKR) are enriched in basic residues.

Belongs to the CGR1 family.

It is found in the nucleus. Its subcellular location is the nucleolus. In terms of biological role, involved in nucleolar integrity and required for processing of the pre-rRNA for the 60S ribosome subunit. The protein is rRNA-processing protein CGR1 (CGR1) of Saccharomyces cerevisiae (strain ATCC 204508 / S288c) (Baker's yeast).